Here is a 712-residue protein sequence, read N- to C-terminus: Polyribonucleotide nucleotidyltransferase (712 aa).

Positions 487 and 493 each coordinate Mg(2+). Positions 554–613 constitute a KH domain; the sequence is PKIITMTINPDKIRDVIGPSGKQINKIIEETGVKIDIEQDGTVFISSINQEMNDKAKKII. The S1 motif domain occupies 623–691; sequence GEIYEGKVKR…KQGRVNLSRK (69 aa).

This sequence belongs to the polyribonucleotide nucleotidyltransferase family. Mg(2+) is required as a cofactor.

Its subcellular location is the cytoplasm. The enzyme catalyses RNA(n+1) + phosphate = RNA(n) + a ribonucleoside 5'-diphosphate. Its function is as follows. Involved in mRNA degradation. Catalyzes the phosphorolysis of single-stranded polyribonucleotides processively in the 3'- to 5'-direction. The protein is Polyribonucleotide nucleotidyltransferase of Bacillus cereus (strain AH187).